Reading from the N-terminus, the 670-residue chain is uncharacterized protein (670 aa).

The disordered stretch occupies residues 53–83 (PTAKPSDFPGDAVTGTQPVPREPSSLPRTTP). Tandem repeats lie at residues 143–158 (ATPA…TTAT), 171–186 (ATPA…TTAT), 200–214 (ATPA…TTTP), 215–233 (ATPA…TTTP), 234–252 (AMPA…TTTP), 253–268 (AMPA…TTAT), 279–293 (TMPA…TTTP), 294–309 (AMPT…TTAT), 320–334 (TMPA…TTTP), 335–349 (AMPA…VTKP), 362–376 (AMPT…TTTP), 377–391 (AMPT…TTTP), 392–406 (AMPT…TTTP), 407–421 (AKPA…TTTP), 422–436 (AMPA…TTAP), 437–452 (ATPA…TKPT), 464–477 (VKPT…TTTT), 478–493 (AKPT…TKPT), 504–517 (AKPT…TVAT), 518–531 (AKPT…TTTT), 532–545 (AKPT…TTTT), 546–559 (AKPT…TTTT), 560–573 (AKPT…TTTT), 574–587 (AKPA…TTTT), 588–601 (AKPA…TTTT), 602–615 (AKPA…TTTT), and 616–629 (AKPA…TTTT). The tract at residues 187–225 (PAGANDTAVTTTSATPAGANDTAVTTTPATPAGANDTAN) is disordered. The span at 205 to 225 (ANDTAVTTTPATPAGANDTAN) shows a compositional bias: low complexity. The interval 339–395 (GANDTANVTKPAGSTDTVVTTTPAMPTGATDTVVTTTPAMPTGATDTVVTTTPAMPT) is disordered. Over residues 342-362 (DTANVTKPAGSTDTVVTTTPA) the composition is skewed to polar residues. Residues 363 to 395 (MPTGATDTVVTTTPAMPTGATDTVVTTTPAMPT) show a composition bias toward low complexity. 2 stretches are compositionally biased toward low complexity: residues 471–482 (GTVTTTTAKPTG) and 490–503 (TKPT…TTTT). A disordered region spans residues 471 to 503 (GTVTTTTAKPTGANDTANVTKPTGATGTVTTTT). The span at 525-634 (GTVTTTTAKP…VTTTTAKPAG (110 aa)) shows a compositional bias: low complexity. A disordered region spans residues 525–670 (GTVTTTTAKP…GHKPKSGARR (146 aa)). Over residues 638 to 654 (GHGHGHGHGHGHGHGHG) the composition is skewed to basic residues.

This is an uncharacterized protein from Ictalurid herpesvirus 1 (strain Auburn) (IcHV-1).